The following is a 181-amino-acid chain: ATP-dependent protease subunit ClpQ (181 aa).

Residue Ser2 is part of the active site. Na(+) is bound by residues Gly165, Cys168, and Thr171.

In terms of assembly, a double ring-shaped homohexamer of ClpQ is capped on each side by a ring-shaped ClpY homohexamer. The assembly of the ClpQ/ClpY complex is dependent on binding of ATP.

The protein localises to the cytoplasm. Its function is as follows. Protease subunit of a proteasome-like degradation complex. The sequence is that of ATP-dependent protease subunit ClpQ (clpQ) from Bacillus subtilis (strain 168).